The chain runs to 142 residues: Putative pre-16S rRNA nuclease (142 aa).

It belongs to the YqgF nuclease family.

Its subcellular location is the cytoplasm. In terms of biological role, could be a nuclease involved in processing of the 5'-end of pre-16S rRNA. The protein is Putative pre-16S rRNA nuclease of Lactobacillus delbrueckii subsp. bulgaricus (strain ATCC 11842 / DSM 20081 / BCRC 10696 / JCM 1002 / NBRC 13953 / NCIMB 11778 / NCTC 12712 / WDCM 00102 / Lb 14).